Consider the following 206-residue polypeptide: Imidazoleglycerol-phosphate dehydratase (206 aa).

The protein belongs to the imidazoleglycerol-phosphate dehydratase family.

The protein localises to the cytoplasm. The enzyme catalyses D-erythro-1-(imidazol-4-yl)glycerol 3-phosphate = 3-(imidazol-4-yl)-2-oxopropyl phosphate + H2O. It participates in amino-acid biosynthesis; L-histidine biosynthesis; L-histidine from 5-phospho-alpha-D-ribose 1-diphosphate: step 6/9. This chain is Imidazoleglycerol-phosphate dehydratase, found in Cutibacterium acnes (strain DSM 16379 / KPA171202) (Propionibacterium acnes).